Reading from the N-terminus, the 382-residue chain is Intermediate transcription factor 3 large subunit (382 aa).

It belongs to the poxviruses A23 family. In terms of assembly, heterodimer of a 45 kDa and a 32 kDa subunit.

Functionally, acts with RNA polymerase to initiate transcription from intermediate gene promoters. This Oryctolagus cuniculus (Rabbit) protein is Intermediate transcription factor 3 large subunit (VITF3L).